The sequence spans 309 residues: Agglutinin (309 aa).

Residue Met-1 is modified to N-acetylmethionine. Jacalin-type lectin domains lie at Phe-4 to Ile-148 and Pro-163 to Tyr-308.

This sequence belongs to the jacalin lectin family.

In terms of biological role, D-mannose/D-glucose-binding lectin. Binds N-linked high-mannose-type glycans. Has a preference for smaller (Man(2)-Man(6)) high-mannose-type glycans to larger (Man(7)-Man(9)) ones. Recognizes both alpha1-6 extended and alpha1-3 extended monoantennary glycans. The addition of alpha1-2Man to the Man-alpha1-3Man-beta branch results in a significant loss of affinity, but beta1-2GlcNAc has some affinity. Has less affinity for biantennary glycans, and affinity is very weak for the biantennary complex-type N-glycans with bisecting GlcNAc. No affinity is observed for tri- and tetra-antennary glycans. Has mitogenic and hemagglutinating activities. This is Agglutinin from Castanea crenata (Japanese chestnut).